A 166-amino-acid polypeptide reads, in one-letter code: Putative glycine-rich cell wall structural protein 1 (166 aa).

The N-terminal stretch at M1–A23 is a signal peptide. 2 R2; Tyr-rich repeats span residues G56–G62 and G93–G99. Residues A105 to S125 form a disordered region. An R2; Tyr-rich repeat occupies G132 to G138. A compositionally biased stretch (gly residues) spans G144–A160. The segment at G144 to E166 is disordered.

The protein resides in the secreted. It is found in the cell wall. Functionally, responsible for plasticity of the cell wall. The polypeptide is Putative glycine-rich cell wall structural protein 1 (GRP-1) (Oryza sativa subsp. japonica (Rice)).